Reading from the N-terminus, the 310-residue chain is N-acetyl-gamma-glutamyl-phosphate reductase (310 aa).

Cys-117 is a catalytic residue.

The protein belongs to the NAGSA dehydrogenase family. Type 2 subfamily.

Its subcellular location is the cytoplasm. The enzyme catalyses N-acetyl-L-glutamate 5-semialdehyde + phosphate + NADP(+) = N-acetyl-L-glutamyl 5-phosphate + NADPH + H(+). It participates in amino-acid biosynthesis; L-arginine biosynthesis; N(2)-acetyl-L-ornithine from L-glutamate: step 3/4. Its function is as follows. Catalyzes the NADPH-dependent reduction of N-acetyl-5-glutamyl phosphate to yield N-acetyl-L-glutamate 5-semialdehyde. The chain is N-acetyl-gamma-glutamyl-phosphate reductase from Rhizobium rhizogenes (strain K84 / ATCC BAA-868) (Agrobacterium radiobacter).